The following is a 148-amino-acid chain: Large-conductance mechanosensitive channel (148 aa).

The next 2 helical transmembrane spans lie at 9–29 (AFAV…GAAF) and 79–99 (IQTV…VKAI).

The protein belongs to the MscL family. As to quaternary structure, homopentamer.

It localises to the cell inner membrane. Channel that opens in response to stretch forces in the membrane lipid bilayer. May participate in the regulation of osmotic pressure changes within the cell. The protein is Large-conductance mechanosensitive channel of Pseudomonas syringae pv. tomato (strain ATCC BAA-871 / DC3000).